We begin with the raw amino-acid sequence, 185 residues long: Transcription factor E (185 aa).

Residues 5 to 88 (KNKELLEIAQ…YWRLETKKLP (84 aa)) form the HTH TFE/IIEalpha-type domain.

The protein belongs to the TFE family. As to quaternary structure, monomer. Interaction with RNA polymerase subunits RpoF and RpoE is necessary for Tfe stimulatory transcription activity. Able to interact with Tbp and RNA polymerase in the absence of DNA promoter. Interacts both with the preinitiation and elongation complexes.

Functionally, transcription factor that plays a role in the activation of archaeal genes transcribed by RNA polymerase. Facilitates transcription initiation by enhancing TATA-box recognition by TATA-box-binding protein (Tbp), and transcription factor B (Tfb) and RNA polymerase recruitment. Not absolutely required for transcription in vitro, but particularly important in cases where Tbp or Tfb function is not optimal. It dynamically alters the nucleic acid-binding properties of RNA polymerases by stabilizing the initiation complex and destabilizing elongation complexes. Seems to translocate with the RNA polymerase following initiation and acts by binding to the non template strand of the transcription bubble in elongation complexes. The protein is Transcription factor E of Thermococcus kodakarensis (strain ATCC BAA-918 / JCM 12380 / KOD1) (Pyrococcus kodakaraensis (strain KOD1)).